Here is a 288-residue protein sequence, read N- to C-terminus: Alpha/beta hydrolase domain-containing protein 17B (288 aa).

Catalysis depends on charge relay system residues S170, D235, and H264.

This sequence belongs to the AB hydrolase superfamily. ABHD17 family. Post-translationally, palmitoylated on cysteine residues located in a cysteine cluster at the N-terminus which promotes membrane localization.

It localises to the cell membrane. Its subcellular location is the recycling endosome membrane. The protein resides in the cell projection. It is found in the dendritic spine. The protein localises to the postsynaptic density membrane. The enzyme catalyses S-hexadecanoyl-L-cysteinyl-[protein] + H2O = L-cysteinyl-[protein] + hexadecanoate + H(+). Its function is as follows. Hydrolyzes fatty acids from S-acylated cysteine residues in proteins. Has depalmitoylating activity towards nras. The chain is Alpha/beta hydrolase domain-containing protein 17B from Xenopus laevis (African clawed frog).